We begin with the raw amino-acid sequence, 388 residues long: Processive diacylglycerol beta-glucosyltransferase (388 aa).

It belongs to the glycosyltransferase 28 family. UgtP subfamily.

It is found in the cell membrane. It catalyses the reaction a 1,2-diacyl-3-O-(beta-D-glucopyranosyl)-sn-glycerol + UDP-alpha-D-glucose = a 1,2-diacyl-3-O-(beta-D-Glc-(1-&gt;6)-beta-D-Glc)-sn-glycerol + UDP + H(+). The enzyme catalyses a 1,2-diacyl-3-O-(beta-D-Glc-(1-&gt;6)-beta-D-Glc)-sn-glycerol + UDP-alpha-D-glucose = a 1,2-diacyl-3-O-(beta-D-Glc-(1-&gt;6)-beta-D-Glc-(1-&gt;6)-beta-D-Glc)-sn-glycerol + UDP + H(+). The catalysed reaction is a 1,2-diacyl-sn-glycerol + UDP-alpha-D-glucose = a 1,2-diacyl-3-O-(beta-D-glucopyranosyl)-sn-glycerol + UDP + H(+). Its pathway is glycolipid metabolism; diglucosyl-diacylglycerol biosynthesis. Its function is as follows. Processive glucosyltransferase involved in the biosynthesis of both the bilayer- and non-bilayer-forming membrane glucolipids. Is able to successively transfer up to three glucosyl residues to diacylglycerol (DAG), thereby catalyzing the formation of beta-monoglucosyl-DAG (3-O-(beta-D-glucopyranosyl)-1,2-diacyl-sn-glycerol), beta-diglucosyl-DAG (3-O-(beta-D-glucopyranosyl-beta-(1-&gt;6)-D-glucopyranosyl)-1,2-diacyl-sn-glycerol) and beta-triglucosyl-DAG (3-O-(beta-D-glucopyranosyl-beta-(1-&gt;6)-D-glucopyranosyl-beta-(1-&gt;6)-D-glucopyranosyl)-1,2-diacyl-sn-glycerol). Beta-diglucosyl-DAG is the predominant glycolipid found in Bacillales and is also used as a membrane anchor for lipoteichoic acid (LTA). The protein is Processive diacylglycerol beta-glucosyltransferase of Bacillus cereus (strain 03BB102).